The sequence spans 158 residues: Putative ribosomal RNA large subunit methyltransferase H (158 aa).

S-adenosyl-L-methionine-binding positions include leucine 76, glycine 107, and 126–131 (LSRMTF).

This sequence belongs to the RNA methyltransferase RlmH family.

The protein localises to the cytoplasm. The catalysed reaction is pseudouridine(1915) in 23S rRNA + S-adenosyl-L-methionine = N(3)-methylpseudouridine(1915) in 23S rRNA + S-adenosyl-L-homocysteine + H(+). Its function is as follows. Specifically methylates the pseudouridine at position 1915 (m3Psi1915) in 23S rRNA. The sequence is that of Putative ribosomal RNA large subunit methyltransferase H from Methanocorpusculum labreanum (strain ATCC 43576 / DSM 4855 / Z).